The following is a 413-amino-acid chain: Glucose-1-phosphate adenylyltransferase (413 aa).

Alpha-D-glucose 1-phosphate is bound by residues glycine 163, 179 to 180 (EK), and serine 197.

This sequence belongs to the bacterial/plant glucose-1-phosphate adenylyltransferase family. In terms of assembly, homotetramer.

The enzyme catalyses alpha-D-glucose 1-phosphate + ATP + H(+) = ADP-alpha-D-glucose + diphosphate. It participates in glycan biosynthesis; glycogen biosynthesis. In terms of biological role, involved in the biosynthesis of ADP-glucose, a building block required for the elongation reactions to produce glycogen. Catalyzes the reaction between ATP and alpha-D-glucose 1-phosphate (G1P) to produce pyrophosphate and ADP-Glc. In Parafrankia sp. (strain EAN1pec), this protein is Glucose-1-phosphate adenylyltransferase.